A 212-amino-acid polypeptide reads, in one-letter code: Peroxisomal membrane protein 4 (212 aa).

Asparagine 57 carries an N-linked (GlcNAc...) asparagine glycan. 2 consecutive transmembrane segments (helical) span residues 97 to 117 (GKTY…LVFG) and 153 to 173 (WDPF…LFEY). N-linked (GlcNAc...) asparagine glycosylation occurs at asparagine 206.

Belongs to the peroxisomal membrane protein PXMP2/4 family. As to quaternary structure, interacts with PEX19. As to expression, expressed in normal prostate epithelial cells, and androgen-sensitive prostate adenocarcinoma cells. Not expressed in androgen-insensitive prostate adenocarcinoma cells.

The protein localises to the peroxisome membrane. The protein is Peroxisomal membrane protein 4 (PXMP4) of Homo sapiens (Human).